The sequence spans 335 residues: Holliday junction branch migration complex subunit RuvB (335 aa).

Positions 1-181 (MDRIVEIEKY…FGMQFRLEFY (181 aa)) are large ATPase domain (RuvB-L). ATP-binding positions include leucine 20, arginine 21, glycine 62, lysine 65, threonine 66, threonine 67, 128-130 (EDY), arginine 171, tyrosine 181, and arginine 218. Residue threonine 66 coordinates Mg(2+). The small ATPAse domain (RuvB-S) stretch occupies residues 182–252 (KDSELALILQ…RANEALNSLG (71 aa)). The tract at residues 255–335 (ELGFDAMDLR…LNYEKTLFEE (81 aa)) is head domain (RuvB-H). Residues arginine 309 and arginine 314 each contribute to the DNA site.

This sequence belongs to the RuvB family. As to quaternary structure, homohexamer. Forms an RuvA(8)-RuvB(12)-Holliday junction (HJ) complex. HJ DNA is sandwiched between 2 RuvA tetramers; dsDNA enters through RuvA and exits via RuvB. An RuvB hexamer assembles on each DNA strand where it exits the tetramer. Each RuvB hexamer is contacted by two RuvA subunits (via domain III) on 2 adjacent RuvB subunits; this complex drives branch migration. In the full resolvosome a probable DNA-RuvA(4)-RuvB(12)-RuvC(2) complex forms which resolves the HJ.

It localises to the cytoplasm. The enzyme catalyses ATP + H2O = ADP + phosphate + H(+). Functionally, the RuvA-RuvB-RuvC complex processes Holliday junction (HJ) DNA during genetic recombination and DNA repair, while the RuvA-RuvB complex plays an important role in the rescue of blocked DNA replication forks via replication fork reversal (RFR). RuvA specifically binds to HJ cruciform DNA, conferring on it an open structure. The RuvB hexamer acts as an ATP-dependent pump, pulling dsDNA into and through the RuvAB complex. RuvB forms 2 homohexamers on either side of HJ DNA bound by 1 or 2 RuvA tetramers; 4 subunits per hexamer contact DNA at a time. Coordinated motions by a converter formed by DNA-disengaged RuvB subunits stimulates ATP hydrolysis and nucleotide exchange. Immobilization of the converter enables RuvB to convert the ATP-contained energy into a lever motion, pulling 2 nucleotides of DNA out of the RuvA tetramer per ATP hydrolyzed, thus driving DNA branch migration. The RuvB motors rotate together with the DNA substrate, which together with the progressing nucleotide cycle form the mechanistic basis for DNA recombination by continuous HJ branch migration. Branch migration allows RuvC to scan DNA until it finds its consensus sequence, where it cleaves and resolves cruciform DNA. This is Holliday junction branch migration complex subunit RuvB from Campylobacter jejuni (strain RM1221).